Reading from the N-terminus, the 557-residue chain is Formate--tetrahydrofolate ligase (557 aa).

Threonine 67–serine 74 lines the ATP pocket.

It belongs to the formate--tetrahydrofolate ligase family.

It carries out the reaction (6S)-5,6,7,8-tetrahydrofolate + formate + ATP = (6R)-10-formyltetrahydrofolate + ADP + phosphate. The protein operates within one-carbon metabolism; tetrahydrofolate interconversion. This Lacticaseibacillus paracasei (strain ATCC 334 / BCRC 17002 / CCUG 31169 / CIP 107868 / KCTC 3260 / NRRL B-441) (Lactobacillus paracasei) protein is Formate--tetrahydrofolate ligase.